The following is a 686-amino-acid chain: Amphiphysin (686 aa).

Coiled-coil stretches lie at residues 10–83 (AKNV…SLHE) and 144–191 (DYDS…QEEL). Residues 24–240 (VLQKLGKADE…MTKLGDQHAD (217 aa)) enclose the BAR domain. 3 disordered regions span residues 244–314 (SIQG…PTKE), 421–441 (AETEQALPTEPQAEEPPATAA), and 483–597 (VEEA…AGAV). Serine 252 bears the Phosphoserine mark. Residue threonine 260 is modified to Phosphothreonine. A compositionally biased stretch (pro residues) spans 261-274 (PSPPEEPSPLPSPT). Residues serine 262, serine 268, serine 272, and serine 276 each carry the phosphoserine modification. Threonine 280 bears the Phosphothreonine mark. Residues 424–441 (EQALPTEPQAEEPPATAA) show a composition bias toward low complexity. The residue at position 500 (serine 500) is a Phosphoserine. Residues 541 to 562 (SNHEGEGEHQETATGTEPREAA) show a composition bias toward basic and acidic residues. The region spanning 613-686 (GFLYKVETLH…FPENFTRRLE (74 aa)) is the SH3 domain. The residue at position 629 (serine 629) is a Phosphoserine.

In terms of assembly, heterodimer with BIN1. Binds SH3GLB1. Interacts with REPS1 and SGIP1. Binds AP2A2. Interacts with AP2B1. Interacts with DNM1 and SYNJ1.

The protein localises to the cytoplasmic vesicle. It is found in the secretory vesicle. It localises to the synaptic vesicle membrane. The protein resides in the cytoplasm. Its subcellular location is the cytoskeleton. In terms of biological role, may participate in mechanisms of regulated exocytosis in synapses and certain endocrine cell types. May control the properties of the membrane associated cytoskeleton. The chain is Amphiphysin (Amph) from Mus musculus (Mouse).